The following is a 39-amino-acid chain: Fructose 5-dehydrogenase [NADP(+)] (39 aa).

The enzyme catalyses D-fructose + NADP(+) = 5-dehydro-D-fructose + NADPH + H(+). The chain is Fructose 5-dehydrogenase [NADP(+)] from Erwinia citreus.